Reading from the N-terminus, the 441-residue chain is Ribulose bisphosphate carboxylase large chain (441 aa).

Position 5 is an N6,N6,N6-trimethyllysine (lysine 5). 2 residues coordinate substrate: asparagine 114 and threonine 164. The Proton acceptor role is filled by lysine 166. Lysine 168 is a substrate binding site. The Mg(2+) site is built by lysine 192, aspartate 194, and glutamate 195. Lysine 192 is subject to N6-carboxylysine. Histidine 285 functions as the Proton acceptor in the catalytic mechanism. Substrate-binding residues include arginine 286, histidine 318, and serine 370.

The protein belongs to the RuBisCO large chain family. Type I subfamily. As to quaternary structure, heterohexadecamer of 8 large chains and 8 small chains; disulfide-linked. The disulfide link is formed within the large subunit homodimers. Mg(2+) is required as a cofactor. In terms of processing, the disulfide bond which can form in the large chain dimeric partners within the hexadecamer appears to be associated with oxidative stress and protein turnover.

It localises to the plastid. Its subcellular location is the chloroplast. The enzyme catalyses 2 (2R)-3-phosphoglycerate + 2 H(+) = D-ribulose 1,5-bisphosphate + CO2 + H2O. It carries out the reaction D-ribulose 1,5-bisphosphate + O2 = 2-phosphoglycolate + (2R)-3-phosphoglycerate + 2 H(+). In terms of biological role, ruBisCO catalyzes two reactions: the carboxylation of D-ribulose 1,5-bisphosphate, the primary event in carbon dioxide fixation, as well as the oxidative fragmentation of the pentose substrate in the photorespiration process. Both reactions occur simultaneously and in competition at the same active site. The protein is Ribulose bisphosphate carboxylase large chain of Drosera petiolaris (Woolly sundew).